We begin with the raw amino-acid sequence, 156 residues long: Small ribosomal subunit protein uS7 (156 aa).

Belongs to the universal ribosomal protein uS7 family. As to quaternary structure, part of the 30S ribosomal subunit. Contacts proteins S9 and S11.

Its function is as follows. One of the primary rRNA binding proteins, it binds directly to 16S rRNA where it nucleates assembly of the head domain of the 30S subunit. Is located at the subunit interface close to the decoding center, probably blocks exit of the E-site tRNA. This chain is Small ribosomal subunit protein uS7, found in Nitrobacter winogradskyi (strain ATCC 25391 / DSM 10237 / CIP 104748 / NCIMB 11846 / Nb-255).